A 141-amino-acid chain; its full sequence is Large ribosomal subunit protein uL16 (141 aa).

This sequence belongs to the universal ribosomal protein uL16 family. Part of the 50S ribosomal subunit.

Functionally, binds 23S rRNA and is also seen to make contacts with the A and possibly P site tRNAs. The sequence is that of Large ribosomal subunit protein uL16 from Campylobacter concisus (strain 13826).